Here is a 477-residue protein sequence, read N- to C-terminus: MSPQTETKASVGFKAGVKEYKLTYYTPEYQTKDTDILAAFRVTPQPGVPPEEAGAAVAAESSTGTWTTVWTDGLTSLDRYKGRCYRIERVVGEKDQYIAYVAYPLDLFEEGSVTNMLTSIVGNVFGFKALRALRLEDLRIPVAYVKTFQGPPHGIQVERDKLNKYGRPLLGCTIKPKLGLSAKNYGRAVYECLRGGLDFTKDDENVNSQPFMRWRDRFLFCAEALFKAQAETGEIKGHYLNATAGTCEEMMKRAVFARELGTPIVMHDYLTGGFTANTTLAHYCRDNGLLLHIHRAMHAVIDRQKNHGMHFRVLAKALRMSGGDHIHSGTVVGKLEGERDITLGFVDLLRDDFIEQDRSRGIYFTQDWVSLPGVLPVASGGIHVWHMPALTEIFGDDSVLQFGGGTLGHPWGNAPGAVANRVALEACVKARNEGRDLAREGNEIIREAAKWSPELAAACEVWKEIVFNFAAMDVLDK.

The propeptide occupies 1 to 2 (MS). Pro-3 is subject to N-acetylproline. N6,N6,N6-trimethyllysine is present on Lys-14. 2 residues coordinate substrate: Asn-123 and Thr-173. Lys-175 functions as the Proton acceptor in the catalytic mechanism. Lys-177 provides a ligand contact to substrate. The Mg(2+) site is built by Lys-201, Asp-203, and Glu-204. Lys-201 carries the post-translational modification N6-carboxylysine. Residue His-294 is the Proton acceptor of the active site. The substrate site is built by Arg-295, His-327, and Ser-379.

It belongs to the RuBisCO large chain family. Type I subfamily. In terms of assembly, heterohexadecamer of 8 large chains and 8 small chains; disulfide-linked. The disulfide link is formed within the large subunit homodimers. Mg(2+) is required as a cofactor. Post-translationally, the disulfide bond which can form in the large chain dimeric partners within the hexadecamer appears to be associated with oxidative stress and protein turnover.

It localises to the plastid. The protein localises to the chloroplast. It carries out the reaction 2 (2R)-3-phosphoglycerate + 2 H(+) = D-ribulose 1,5-bisphosphate + CO2 + H2O. The catalysed reaction is D-ribulose 1,5-bisphosphate + O2 = 2-phosphoglycolate + (2R)-3-phosphoglycerate + 2 H(+). Its function is as follows. RuBisCO catalyzes two reactions: the carboxylation of D-ribulose 1,5-bisphosphate, the primary event in carbon dioxide fixation, as well as the oxidative fragmentation of the pentose substrate in the photorespiration process. Both reactions occur simultaneously and in competition at the same active site. The protein is Ribulose bisphosphate carboxylase large chain (rbcL) of Solanum tuberosum (Potato).